Consider the following 326-residue polypeptide: Cyclin-dependent kinase 6 (326 aa).

The residue at position 1 (Met1) is an N-acetylmethionine. Tyr13 and Tyr24 each carry phosphotyrosine. The 288-residue stretch at 13 to 300 (YECVAEIGEG…AYSALSHPYF (288 aa)) folds into the Protein kinase domain. Residues 19–27 (IGEGAYGKV) and Lys43 contribute to the ATP site. Residues Thr49 and Thr70 each carry the phosphothreonine modification. Asp145 functions as the Proton acceptor in the catalytic mechanism. Residue Thr177 is modified to Phosphothreonine. At Lys264 the chain carries N6-acetyllysine. Phosphothreonine is present on Thr325.

The protein belongs to the protein kinase superfamily. CMGC Ser/Thr protein kinase family. CDC2/CDKX subfamily. In terms of assembly, interaction with D-type G1 cyclins. Cyclin binding promotes enzyme activation by phosphorylation at Thr-177. Binds to RUNX1, CDKN2D, FBXO7 and CDKN2C/p18-INK4c. Forms a cytoplasmic complex with Hsp90/HSP90AB1 and CDC37. FBXO7-binding promotes D-type cyclin binding. Interacts with Kaposi's sarcoma herpesvirus (KSHV) V-cyclin and herpesvirus saimiri (V-cyclin/ECLF2); the CDK6/V-cyclin complex phosphorylates NPM1 and thus lead to viral reactivation by reducing viral LANA levels. Thr-177 phosphorylation and Tyr-24 dephosphorylation promotes kinase activity. As to expression, expressed ubiquitously. Accumulates in squamous cell carcinomas, proliferating hematopoietic progenitor cells, beta-cells of pancreatic islets of Langerhans, and neuroblastomas. Reduced levels in differentiating cells.

Its subcellular location is the cytoplasm. It is found in the nucleus. The protein resides in the cell projection. The protein localises to the ruffle. It localises to the cytoskeleton. Its subcellular location is the microtubule organizing center. It is found in the centrosome. It carries out the reaction L-seryl-[protein] + ATP = O-phospho-L-seryl-[protein] + ADP + H(+). It catalyses the reaction L-threonyl-[protein] + ATP = O-phospho-L-threonyl-[protein] + ADP + H(+). With respect to regulation, inhibited by INK4 proteins (CDKN2C/p18-INK4c), aminopurvalanol, PD0332991, 4-(Pyrazol-4-yl)-pyrimidines and fisetin, a flavonol inhibitor. Activated by Thr-177 phosphorylation and Tyr-24 dephosphorylation. Stimulated by cyclin from herpesvirus saimiri (V-cyclin/ECLF2). Rapidly down-regulated prior to cell differentiation (e.g. erythroid and osteoblast). Functionally, serine/threonine-protein kinase involved in the control of the cell cycle and differentiation; promotes G1/S transition. Phosphorylates pRB/RB1 and NPM1. Interacts with D-type G1 cyclins during interphase at G1 to form a pRB/RB1 kinase and controls the entrance into the cell cycle. Involved in initiation and maintenance of cell cycle exit during cell differentiation; prevents cell proliferation and negatively regulates cell differentiation, but is required for the proliferation of specific cell types (e.g. erythroid and hematopoietic cells). Essential for cell proliferation within the dentate gyrus of the hippocampus and the subventricular zone of the lateral ventricles. Required during thymocyte development. Promotes the production of newborn neurons, probably by modulating G1 length. Promotes, at least in astrocytes, changes in patterns of gene expression, changes in the actin cytoskeleton including loss of stress fibers, and enhanced motility during cell differentiation. Prevents myeloid differentiation by interfering with RUNX1 and reducing its transcription transactivation activity, but promotes proliferation of normal myeloid progenitors. Delays senescence. Promotes the proliferation of beta-cells in pancreatic islets of Langerhans. May play a role in the centrosome organization during the cell cycle phases. The sequence is that of Cyclin-dependent kinase 6 (CDK6) from Homo sapiens (Human).